A 293-amino-acid polypeptide reads, in one-letter code: Magnetosome protein MamB (293 aa).

Over 1-12 (MTTAACRKCRDE) the chain is Cytoplasmic. Positions 1–214 (MTTAACRKCR…GLMDTSVEND (214 aa)) are transmembrane domain (TMD). Residues 13-33 (VIWWAFFINIGQTTYKGVLGV) traverse the membrane as a helical segment. The Lumenal portion of the chain corresponds to 34 to 78 (LSGSAALVADAMHSGADVVATLVTMFSVKVSDKKADEKYPFGYGN). Residues 79 to 99 (IQFIASSIVGLILFFGALYLM) form a helical membrane-spanning segment. Topologically, residues 100-105 (YESTMQ) are cytoplasmic. Residues 106-126 (IIAGNTSSPSPFAVLGAIVSI) traverse the membrane as a helical segment. The Lumenal segment spans residues 127–158 (ATNELMFRYQSCVGRQNNSPAIIANAWDNRSD). The helical transmembrane segment at 159 to 179 (ALSSVAVLIGIVAAVVGFPIA) threads the bilayer. Residues 180 to 293 (DRLAAIGVGI…VGVTPVRIAA (114 aa)) are Cytoplasmic-facing. The segment at 215–293 (VLVDAYNIAK…VGVTPVRIAA (79 aa)) is C-terminal domain (CTD). Zn(2+)-binding residues include H245, D247, and H283.

This sequence belongs to the cation diffusion facilitator (CDF) transporter (TC 2.A.4) family. In terms of assembly, the isolated C-terminal domain (approximately 213-293) forms homodimers. Forms heterodimers with MamM.

Its subcellular location is the magnetosome membrane. Plays a dual, essential role in magnetosome formation; required for magnetosome vesicle formation as well as biomineralization. Probably binds and transports iron. Requires heterodimerization with MamM for stability. In Magnetospira sp. (strain QH-2) (Marine magnetic spirillum (strain QH-2)), this protein is Magnetosome protein MamB (mamB).